Here is a 457-residue protein sequence, read N- to C-terminus: Multidrug resistance protein MdtK (457 aa).

12 helical membrane passes run 11–31, 53–73, 93–113, 127–147, 160–180, 189–209, 243–263, 276–296, 314–334, 350–370, 387–407, and 418–438; these read LLAL…MGFV, IWLP…PVIA, WLAG…GYII, AVGY…FQVA, GMVM…IFIY, GGVG…LAMV, LPIA…ALLV, IALN…AAVT, AART…IFTV, VVTL…SDSI, IFYI…YILA, and PAGF…MMML.

This sequence belongs to the multi antimicrobial extrusion (MATE) (TC 2.A.66.1) family. MdtK subfamily.

Its subcellular location is the cell inner membrane. Functionally, multidrug efflux pump that functions probably as a Na(+)/drug antiporter. The chain is Multidrug resistance protein MdtK from Escherichia coli O45:K1 (strain S88 / ExPEC).